The sequence spans 72 residues: Bowman-Birk type trypsin inhibitor (72 aa).

7 disulfide bridges follow: Cys-12-Cys-66, Cys-13-Cys-28, Cys-16-Cys-62, Cys-18-Cys-26, Cys-36-Cys-43, Cys-40-Cys-55, and Cys-45-Cys-53.

Belongs to the Bowman-Birk serine protease inhibitor family.

The chain is Bowman-Birk type trypsin inhibitor from Vigna radiata var. radiata (Mung bean).